The following is a 236-amino-acid chain: MRQHVNPLSRSFQLPLRLPPPSELFTHPEHPIHLDIGCARGRCILDLADRHPNWNHIGVEIRRPLVIPADREALESPHGNVRVLFCNANISLEGWMETLPKDRLQRVSIQFPDPWFKRRHRKRRVLQPRLLMAIASALQPGKDFFIQSDVREVIDPMVALTELSGCFDRPENDAHPWRRTNPLTVPTERERYVMDQQLPVYRVLFRRNHTHQPPIEEFEQHWQEIDNPGNAPTPDA.

Residues D35, E60, N87, and D113 each contribute to the S-adenosyl-L-methionine site. The active site involves D113. Substrate-binding residues include K117 and D149. The disordered stretch occupies residues 217-236 (EFEQHWQEIDNPGNAPTPDA).

This sequence belongs to the class I-like SAM-binding methyltransferase superfamily. TrmB family.

The enzyme catalyses guanosine(46) in tRNA + S-adenosyl-L-methionine = N(7)-methylguanosine(46) in tRNA + S-adenosyl-L-homocysteine. It participates in tRNA modification; N(7)-methylguanine-tRNA biosynthesis. Catalyzes the formation of N(7)-methylguanine at position 46 (m7G46) in tRNA. This is tRNA (guanine-N(7)-)-methyltransferase from Synechococcus sp. (strain CC9902).